A 510-amino-acid chain; its full sequence is 2,3-bisphosphoglycerate-independent phosphoglycerate mutase (510 aa).

The Mn(2+) site is built by aspartate 13 and serine 63. Residue serine 63 is the Phosphoserine intermediate of the active site. Residues histidine 124, 154 to 155 (RD), arginine 186, arginine 192, 262 to 265 (RADR), and lysine 334 each bind substrate. Aspartate 401, histidine 405, aspartate 442, histidine 443, and histidine 461 together coordinate Mn(2+).

The protein belongs to the BPG-independent phosphoglycerate mutase family. In terms of assembly, monomer. Mn(2+) serves as cofactor.

It carries out the reaction (2R)-2-phosphoglycerate = (2R)-3-phosphoglycerate. Its pathway is carbohydrate degradation; glycolysis; pyruvate from D-glyceraldehyde 3-phosphate: step 3/5. In terms of biological role, catalyzes the interconversion of 2-phosphoglycerate and 3-phosphoglycerate. The sequence is that of 2,3-bisphosphoglycerate-independent phosphoglycerate mutase from Vibrio cholerae serotype O1 (strain ATCC 39541 / Classical Ogawa 395 / O395).